We begin with the raw amino-acid sequence, 252 residues long: Adenosylcobinamide-GDP ribazoletransferase (252 aa).

The next 7 helical transmembrane spans lie at 4-24 (LFKGLMMSLSMFTIIPMPYVE), 38-58 (PIIGLIVGCVWFLGYKLINYL), 60-80 (ISIVLKSALIMIIPFIITGML), 113-133 (FSVISVIILFFIQFGAVHSFL), 141-161 (ILMFLPIISRNIVAYFFITII), 190-210 (LVCILFGSILGYIGIAILLIV), and 232-252 (VAGFSLVVGEIVGLFSACLFT).

This sequence belongs to the CobS family. It depends on Mg(2+) as a cofactor.

It is found in the cell membrane. It catalyses the reaction alpha-ribazole + adenosylcob(III)inamide-GDP = adenosylcob(III)alamin + GMP + H(+). The catalysed reaction is alpha-ribazole 5'-phosphate + adenosylcob(III)inamide-GDP = adenosylcob(III)alamin 5'-phosphate + GMP + H(+). Its pathway is cofactor biosynthesis; adenosylcobalamin biosynthesis; adenosylcobalamin from cob(II)yrinate a,c-diamide: step 7/7. Functionally, joins adenosylcobinamide-GDP and alpha-ribazole to generate adenosylcobalamin (Ado-cobalamin). Also synthesizes adenosylcobalamin 5'-phosphate from adenosylcobinamide-GDP and alpha-ribazole 5'-phosphate. The chain is Adenosylcobinamide-GDP ribazoletransferase from Clostridium botulinum (strain Alaska E43 / Type E3).